The following is a 318-amino-acid chain: NADH-ubiquinone oxidoreductase chain 1 (318 aa).

8 consecutive transmembrane segments (helical) span residues 3-23 (LINLLAMIVPVLLAVAFLTLL), 69-89 (MLFIIAPTLALTLALTMWTPL), 102-122 (MLFILALSSLAVYTIMWSGWA), 144-164 (VTLAIIILSLLLMNGSFTLLS), 171-191 (YIWLLIPSWPLAMMWFISTLA), 222-242 (LFFLAEYANIIMMNALTIILF), 253-273 (ELYTINFTIKTLLFTAFFLWI), and 294-314 (LPLTLVMCMWHVALPIMLAGI).

Belongs to the complex I subunit 1 family. Core subunit of respiratory chain NADH dehydrogenase (Complex I) which is composed of 45 different subunits.

It is found in the mitochondrion inner membrane. It carries out the reaction a ubiquinone + NADH + 5 H(+)(in) = a ubiquinol + NAD(+) + 4 H(+)(out). In terms of biological role, core subunit of the mitochondrial membrane respiratory chain NADH dehydrogenase (Complex I) which catalyzes electron transfer from NADH through the respiratory chain, using ubiquinone as an electron acceptor. Essential for the catalytic activity and assembly of complex I. This Murina suilla (Brown tube-nosed bat) protein is NADH-ubiquinone oxidoreductase chain 1 (MT-ND1).